A 134-amino-acid chain; its full sequence is Arginine decarboxylase proenzyme (134 aa).

The active-site Schiff-base intermediate with substrate; via pyruvic acid is the serine 82. Serine 82 bears the Pyruvic acid (Ser); by autocatalysis mark. The active-site Proton acceptor; for processing activity is histidine 87. Catalysis depends on cysteine 102, which acts as the Proton donor; for catalytic activity.

It belongs to the prokaryotic AdoMetDC family. Type 1 subfamily. Heterooctamer of four alpha and four beta chains arranged as a tetramer of alpha/beta heterodimers. Requires pyruvate as cofactor. Is synthesized initially as an inactive proenzyme. Formation of the active enzyme involves a self-maturation process in which the active site pyruvoyl group is generated from an internal serine residue via an autocatalytic post-translational modification. Two non-identical subunits are generated from the proenzyme in this reaction, and the pyruvate is formed at the N-terminus of the alpha chain, which is derived from the carboxyl end of the proenzyme. The post-translation cleavage follows an unusual pathway, termed non-hydrolytic serinolysis, in which the side chain hydroxyl group of the serine supplies its oxygen atom to form the C-terminus of the beta chain, while the remainder of the serine residue undergoes an oxidative deamination to produce ammonia and the pyruvoyl group blocking the N-terminus of the alpha chain.

It carries out the reaction L-arginine + H(+) = agmatine + CO2. Its pathway is amine and polyamine biosynthesis; agmatine biosynthesis; agmatine from L-arginine: step 1/1. With respect to regulation, highly competitively inhibited by L-argininamide and L-arginine methyl ester. Also inhibited by alpha-difluoromethylarginine. Is not stimulated by potassium chloride as observed for other decarboxylases. In terms of biological role, specifically catalyzes the decarboxylation of L-arginine to agmatine. Is also able to decarboxylate L-canavanine, although less efficiently. Has no S-adenosylmethionine decarboxylase (AdoMetDC) activity. In Saccharolobus solfataricus (strain ATCC 35092 / DSM 1617 / JCM 11322 / P2) (Sulfolobus solfataricus), this protein is Arginine decarboxylase proenzyme.